Consider the following 240-residue polypeptide: Myogenic factor 6 (240 aa).

The region spanning 91-142 (DRRKAATLRERRRLKKINEAFEALKRRTVANPNQRLPKVEILRSAINYIERL) is the bHLH domain.

As to quaternary structure, efficient DNA binding requires dimerization with another bHLH protein. Skeletal muscle.

The protein localises to the nucleus. Involved in muscle differentiation (myogenic factor). Induces fibroblasts to differentiate into myoblasts. Probable sequence specific DNA-binding protein. This chain is Myogenic factor 6 (myf6), found in Xenopus laevis (African clawed frog).